Here is a 136-residue protein sequence, read N- to C-terminus: Large ribosomal subunit protein uL16 (136 aa).

This sequence belongs to the universal ribosomal protein uL16 family. In terms of assembly, part of the 50S ribosomal subunit.

In terms of biological role, binds 23S rRNA and is also seen to make contacts with the A and possibly P site tRNAs. The protein is Large ribosomal subunit protein uL16 of Mannheimia succiniciproducens (strain KCTC 0769BP / MBEL55E).